The primary structure comprises 614 residues: Nuclear receptor subfamily 1 group D member 1 (614 aa).

The segment covering 1-12 has biased composition (polar residues); the sequence is MTTLDSNNNTGG. Residues 1–70 are required for phosphorylation by CSNK1E and cytoplasmic localization; that stretch reads MTTLDSNNNT…TQDPARSFGS (70 aa). Residues 1–119 form a disordered region; it reads MTTLDSNNNT…SSRVSPSKST (119 aa). A modulating region spans residues 1 to 128; the sequence is MTTLDSNNNT…TSNITKLNGM (128 aa). Residues 14-34 show a composition bias toward low complexity; that stretch reads ITYIGSSGSSPSRTSPESLYS. The segment covering 35 to 48 has biased composition (polar residues); that stretch reads DNSNGSFQSLTQGC. The tract at residues 49–284 is crucial for activation of GJA1; sequence PTYFPPSPTG…PPRSPSPEPT (236 aa). Phosphoserine; by GSK3-beta occurs at positions 55 and 59. The span at 69–102 shows a compositional bias: low complexity; the sequence is GSIPPSLSDDGSPSSSSSSSSSSSSFYNGSPPGS. The nuclear receptor DNA-binding region spans 129 to 205; it reads VLLCKVCGDV…VGMSRDAVRF (77 aa). 2 consecutive NR C4-type zinc fingers follow at residues 132-152 and 169-193; these read CKVCGDVASGFHYGVHACEGC and CLKNENCSIVRINRNRCQQCRFKKC. 2 positions are modified to N6-acetyllysine; by KAT5: K191 and K192. The span at 233 to 243 shows a compositional bias: polar residues; that stretch reads SQCPLETSPTQ. Disordered stretches follow at residues 233-285 and 311-345; these read SQCP…EPTV and PGNFNANHASGSPPATTPHRWENQGCPPAPNDNNT. The span at 244–261 shows a compositional bias: pro residues; sequence HPTPGPMGPSPPPAPVPS. T274 carries the post-translational modification Phosphothreonine; by CDK1. The region spanning 284–614 is the NR LBD domain; sequence TVEDVISQVA…KLLSFRVDAQ (331 aa). A compositionally biased stretch (polar residues) spans 311–324; it reads PGNFNANHASGSPP. K400 carries the N6-acetyllysine modification. C418 contacts heme. The residue at position 591 (K591) is an N6-acetyllysine. H602 contributes to the heme binding site.

The protein belongs to the nuclear hormone receptor family. NR1 subfamily. As to quaternary structure, binds DNA as a monomer or a homodimer. Interacts with C1D, NR2E3 and SP1. Interacts with OPHN1 (via C-terminus). Interacts with ZNHIT1. Interacts with PER2; the interaction associates PER2 to BMAL1 promoter region. Interacts with CRY1. Interacts with CCAR2. Interacts with SIAH2. Interacts with CDK1. Interacts with FBXW7. Interacts with HUWE1. Interacts with NR0B2. Interacts with NFIL3. Interacts (via domain NR LBD) with HSP90AA1 and HSP90AB1. Ubiquitinated, leading to its proteasomal degradation. Ubiquitinated by SIAH2; leading to its proteasomal degradation. Ubiquitinated by the SCF(FBXW7) complex when phosphorylated by CDK1 leading to its proteasomal degradation. Rapidly ubiquitinated in response to inflammatory triggers and sumoylation is a prerequisite to its ubiquitination. In terms of processing, sumoylated by UBE2I, desumoylated by SENP1, and sumoylation is a prerequisite to its ubiquitination. Post-translationally, phosphorylated by CSNK1E; phosphorylation enhances its cytoplasmic localization. Undergoes lysosome-mediated degradation in a time-dependent manner in the liver. In terms of tissue distribution, widely expressed. Expressed at high levels in the liver, adipose tissue, skeletal muscle and brain. Also expressed in endothelial cells (ECs), vascular smooth muscle cells (VSMCs) and macrophages. Expression oscillates diurnally in the suprachiasmatic nucleus (SCN) of the hypothalamus as well as in peripheral tissues. Expression increases during the differentiation of pre-adipocytes into mature adipocytes. Expressed at high levels in some squamous carcinoma cell lines.

Its subcellular location is the nucleus. The protein localises to the cytoplasm. It is found in the cell projection. The protein resides in the dendrite. It localises to the dendritic spine. In terms of biological role, transcriptional repressor which coordinates circadian rhythm and metabolic pathways in a heme-dependent manner. Integral component of the complex transcription machinery that governs circadian rhythmicity and forms a critical negative limb of the circadian clock by directly repressing the expression of core clock components BMAL1, CLOCK and CRY1. Also regulates genes involved in metabolic functions, including lipid and bile acid metabolism, adipogenesis, gluconeogenesis and the macrophage inflammatory response. Acts as a receptor for heme which stimulates its interaction with the NCOR1/HDAC3 corepressor complex, enhancing transcriptional repression. Recognizes two classes of DNA response elements within the promoter of its target genes and can bind to DNA as either monomers or homodimers, depending on the nature of the response element. Binds as a monomer to a response element composed of the consensus half-site motif 5'-[A/G]GGTCA-3' preceded by an A/T-rich 5' sequence (RevRE), or as a homodimer to a direct repeat of the core motif spaced by two nucleotides (RevDR-2). Acts as a potent competitive repressor of ROR alpha (RORA) function and regulates the levels of its ligand heme by repressing the expression of PPARGC1A, a potent inducer of heme synthesis. Regulates lipid metabolism by repressing the expression of APOC3 and by influencing the activity of sterol response element binding proteins (SREBPs); represses INSIG2 which interferes with the proteolytic activation of SREBPs which in turn govern the rhythmic expression of enzymes with key functions in sterol and fatty acid synthesis. Regulates gluconeogenesis via repression of G6PC1 and PEPCK and adipocyte differentiation via repression of PPARG. Regulates glucagon release in pancreatic alpha-cells via the AMPK-NAMPT-SIRT1 pathway and the proliferation, glucose-induced insulin secretion and expression of key lipogenic genes in pancreatic-beta cells. Positively regulates bile acid synthesis by increasing hepatic expression of CYP7A1 via repression of NR0B2 and NFIL3 which are negative regulators of CYP7A1. Modulates skeletal muscle oxidative capacity by regulating mitochondrial biogenesis and autophagy; controls mitochondrial biogenesis and respiration by interfering with the STK11-PRKAA1/2-SIRT1-PPARGC1A signaling pathway. Represses the expression of SERPINE1/PAI1, an important modulator of cardiovascular disease and the expression of inflammatory cytokines and chemokines in macrophages. Represses gene expression at a distance in macrophages by inhibiting the transcription of enhancer-derived RNAs (eRNAs). Plays a role in the circadian regulation of body temperature and negatively regulates thermogenic transcriptional programs in brown adipose tissue (BAT); imposes a circadian oscillation in BAT activity, increasing body temperature when awake and depressing thermogenesis during sleep. In concert with NR2E3, regulates transcriptional networks critical for photoreceptor development and function. In addition to its activity as a repressor, can also act as a transcriptional activator. In the ovarian granulosa cells acts as a transcriptional activator of STAR which plays a role in steroid biosynthesis. In collaboration with SP1, activates GJA1 transcription in a heme-independent manner. Represses the transcription of CYP2B10, CYP4A10 and CYP4A14. Represses the transcription of CES2. Represses and regulates the circadian expression of TSHB in a NCOR1-dependent manner. Negatively regulates the protein stability of NR3C1 and influences the time-dependent subcellular distribution of NR3C1, thereby affecting its transcriptional regulatory activity. Plays a critical role in the circadian control of neutrophilic inflammation in the lung; under resting, non-stress conditions, acts as a rhythmic repressor to limit inflammatory activity whereas in the presence of inflammatory triggers undergoes ubiquitin-mediated degradation thereby relieving inhibition of the inflammatory response. Plays a key role in the circadian regulation of microglial activation and neuroinflammation; suppresses microglial activation through the NF-kappaB pathway in the central nervous system. Plays a role in the regulation of the diurnal rhythms of lipid and protein metabolism in the skeletal muscle via transcriptional repression of genes controlling lipid and amino acid metabolism in the muscle. The polypeptide is Nuclear receptor subfamily 1 group D member 1 (NR1D1) (Homo sapiens (Human)).